A 150-amino-acid chain; its full sequence is Large ribosomal subunit protein bL9 (150 aa).

It belongs to the bacterial ribosomal protein bL9 family.

Its function is as follows. Binds to the 23S rRNA. This Shewanella halifaxensis (strain HAW-EB4) protein is Large ribosomal subunit protein bL9.